Here is an 820-residue protein sequence, read N- to C-terminus: Probable beta-glucosidase ARB_05654 (820 aa).

The N-terminal stretch at 1 to 18 is a signal peptide; sequence MLFRWCPLVALAIASGTA. N-linked (GlcNAc...) asparagine glycosylation is found at Asn-62 and Asn-276. Residue Asp-304 is part of the active site. Residues Asn-339, Asn-346, Asn-465, Asn-547, Asn-566, Asn-588, and Asn-811 are each glycosylated (N-linked (GlcNAc...) asparagine).

The protein belongs to the glycosyl hydrolase 3 family.

The protein resides in the secreted. The catalysed reaction is Hydrolysis of terminal, non-reducing beta-D-glucosyl residues with release of beta-D-glucose.. The protein operates within glycan metabolism; cellulose degradation. Its function is as follows. Beta-glucosidases are one of a number of cellulolytic enzymes involved in the degradation of cellulosic biomass. Catalyzes the last step releasing glucose from the inhibitory cellobiose. The chain is Probable beta-glucosidase ARB_05654 from Arthroderma benhamiae (strain ATCC MYA-4681 / CBS 112371) (Trichophyton mentagrophytes).